Consider the following 339-residue polypeptide: Pleckstrin homology domain protein opy1 (339 aa).

The region spanning arginine 25–glycine 119 is the PH 1 domain. Over residues glutamate 141–proline 167 the composition is skewed to polar residues. The tract at residues glutamate 141–leucine 170 is disordered. The PH 2 domain maps to lysine 233 to aspartate 330.

Interacts (via domain PH 1) with phosphatidylinositol 4-phosphate 5-kinase its3; the interaction is direct but opy1 does not appear to regulate its3 localization or function.

The protein localises to the cell tip. It localises to the cell membrane. Its function is as follows. Binds phosphatidylinositol 4,5-bisphosphate (PtdIns(4,5)P2/PIP2) at the cell membrane. This chain is Pleckstrin homology domain protein opy1, found in Schizosaccharomyces pombe (strain 972 / ATCC 24843) (Fission yeast).